Consider the following 323-residue polypeptide: MDPKSQRVKFNDGHFIPVLGFGTYAPEEVPKSEALEATKFAIEVGFRHVDSAHLYQNEEQVGQAIRSKIADGTVKREDIFYTSKLWCNSLQPELVRPALEKSLQNLQLDYVDLYIIHSPVSLKPGNKFVPKDESGKLIFDSVDLCHTWEALEKCKDAGLTKSIGVSNFNHKQLEKILNKPGLKYKPVCNQVECHPYLNQSKLLEFCKSHDIVLVAYAALGAQLLSEWVNSNNPVLLEDPVLCAIAKKHKQTPALVALRYQVQRGVVVLAKSFNKKRIKENMQVFDFELTPEDMKAIDGLNRNTRYYDFQQGIGHPEYPFSEEY.

Residues 20–24 (GFGTY) and Asp50 contribute to the NADP(+) site. Residue Tyr55 is the Proton donor of the active site. His117 provides a ligand contact to substrate. NADP(+)-binding positions include 166-167 (SN), Gln190, 216-221 (YAALGA), and 270-280 (KSFNKKRIKEN).

It belongs to the aldo/keto reductase family. In terms of assembly, monomer.

The protein localises to the cytoplasm. The enzyme catalyses prostaglandin F2alpha + NADP(+) = prostaglandin D2 + NADPH + H(+). It participates in lipid metabolism; prostaglandin biosynthesis. Catalyzes the reduction of PGD(2) and PGH(2) to PGF(2 alpha) and a stereoisomer, respectively. It has a broad substrate specificity and also reduces other carbonyl compounds. The sequence is that of Prostaglandin F synthase 2 from Bos taurus (Bovine).